The chain runs to 132 residues: Small ribosomal subunit protein uS8 (132 aa).

The protein belongs to the universal ribosomal protein uS8 family. In terms of assembly, part of the 30S ribosomal subunit. Contacts proteins S5 and S12.

One of the primary rRNA binding proteins, it binds directly to 16S rRNA central domain where it helps coordinate assembly of the platform of the 30S subunit. The protein is Small ribosomal subunit protein uS8 of Streptomyces avermitilis (strain ATCC 31267 / DSM 46492 / JCM 5070 / NBRC 14893 / NCIMB 12804 / NRRL 8165 / MA-4680).